A 420-amino-acid chain; its full sequence is Deoxyribodipyrimidine photo-lyase (420 aa).

In terms of domain architecture, Photolyase/cryptochrome alpha/beta spans 2-124 (GPLLVWHRGD…PLHLLPAPHL (123 aa)). A disordered region spans residues 152–175 (APEALPKGPEEGEIPREDPGLPLP). The span at 159-170 (GPEEGEIPREDP) shows a compositional bias: basic and acidic residues. Tyr197 lines the FAD pocket. Arg201 serves as a coordination point for DNA. An FAD-binding site is contributed by 209 to 213 (GSRLS). 2 interaction with DNA regions span residues 244 to 251 (ELLWRDFS) and 310 to 311 (NR). 341-343 (DGD) provides a ligand contact to FAD. Gln373 contributes to the DNA binding site.

This sequence belongs to the DNA photolyase class-1 family. As to quaternary structure, monomer. FAD serves as cofactor.

It catalyses the reaction cyclobutadipyrimidine (in DNA) = 2 pyrimidine residues (in DNA).. Its function is as follows. Involved in repair of UV radiation-induced DNA damage. Catalyzes the light-dependent monomerization (300-600 nm) of cyclobutyl pyrimidine dimers (in cis-syn configuration), which are formed between adjacent bases on the same DNA strand upon exposure to ultraviolet radiation. The chain is Deoxyribodipyrimidine photo-lyase (phr) from Thermus thermophilus (strain ATCC BAA-163 / DSM 7039 / HB27).